The sequence spans 484 residues: MSHQRILLLLMAAFFAWVSAQTPPGQADKSKLIAHDVLMKTTSLSETTIATSSKRFLRLYDAEVRDTVRGDNDVDREERGTTPLLSKVDDLIHKVFKSNPEQAQIKAWMKSRVHPQAIFDTLRLAKSTTKLNDDPNLLLWLKLVAAFRAKNGNQAFSDLDLYYLLLKRSSGEELKILIESFRKTGALKELGKSMQKSLSGSWVSKTLQHETDPKIVYDTLRLQEAGTKLVDSPIFHQWLAYAQQYRAQKGNHWFGDDDMLDLFRKTMPEKDVVTLLHLLRNVPGMKDHGDTMQRFLFLSSKTSRKMMHDVWLNYDVTPEQVFKILRLVKVNMDAVDTNAMFIHWLRYVNLYRSHTKKNVLSSVQMVHFLADTKPLRSEWQFATFFESLKDVPDLKRLAENMQTYLFQNWLHTEWDPKAVSSMLAIPFPTSAVYLPKNDPIYKTWVAYTLYYTERKGGVSLLNKVKTLLDNDNPIGALTAAMKAQ.

Residues 1–20 (MSHQRILLLLMAAFFAWVSA) form the signal peptide. Positions 55–79 (RFLRLYDAEVRDTVRGDNDVDREER) match the RxLR-dEER motif.

The protein belongs to the RxLR effector family.

It is found in the secreted. Its subcellular location is the host cell membrane. Effector that enhances P.infestans colonization of Nicotiana benthamiana leaves. The chain is RxLR effector protein PexRD18 from Phytophthora infestans (strain T30-4) (Potato late blight agent).